Consider the following 499-residue polypeptide: Putative ribose/galactose/methyl galactoside import ATP-binding protein 3 (499 aa).

ABC transporter domains lie at 8–243 (LRMR…VGRE) and 253–497 (SKIG…TGEE). 40–47 (GENGAGKS) serves as a coordination point for ATP.

The protein belongs to the ABC transporter superfamily. Carbohydrate importer 2 (CUT2) (TC 3.A.1.2) family.

It localises to the cell inner membrane. It catalyses the reaction D-ribose(out) + ATP + H2O = D-ribose(in) + ADP + phosphate + H(+). It carries out the reaction D-galactose(out) + ATP + H2O = D-galactose(in) + ADP + phosphate + H(+). In terms of biological role, part of an ABC transporter complex involved in carbohydrate import. Could be involved in ribose, galactose and/or methyl galactoside import. Responsible for energy coupling to the transport system. This chain is Putative ribose/galactose/methyl galactoside import ATP-binding protein 3, found in Agrobacterium fabrum (strain C58 / ATCC 33970) (Agrobacterium tumefaciens (strain C58)).